The chain runs to 182 residues: Superoxide dismutase [Cu-Zn] (182 aa).

The first 19 residues, 1–19 (MFRTLTVVPLLALGLSLSA), serve as a signal peptide directing secretion. A lipid anchor (N-palmitoyl cysteine) is attached at cysteine 20. Residue cysteine 20 is the site of S-diacylglycerol cysteine attachment. Histidine 69, histidine 71, and histidine 95 together coordinate Cu cation. An intrachain disulfide couples cysteine 76 to cysteine 175. The interval 91 to 118 (AAGGHFDPGASHNHDGPHARNDQGHGGD) is disordered. Residues histidine 95, histidine 104, histidine 115, and aspartate 118 each coordinate Zn(2+). Over residues 102 to 115 (HNHDGPHARNDQGH) the composition is skewed to basic and acidic residues.

It belongs to the Cu-Zn superoxide dismutase family. The cofactor is Cu cation. Requires Zn(2+) as cofactor.

Its subcellular location is the cell membrane. The enzyme catalyses 2 superoxide + 2 H(+) = H2O2 + O2. In terms of biological role, destroys radicals which are normally produced within the cells and which are toxic to biological systems. In Deinococcus radiodurans (strain ATCC 13939 / DSM 20539 / JCM 16871 / CCUG 27074 / LMG 4051 / NBRC 15346 / NCIMB 9279 / VKM B-1422 / R1), this protein is Superoxide dismutase [Cu-Zn] (sodC).